A 1615-amino-acid chain; its full sequence is DNA-directed RNA polymerase I subunit rpa1 (1615 aa).

4 residues coordinate Zn(2+): C65, C68, C75, and H78. Positions 155–181 are disordered; the sequence is GKSNEEGEEVMESDESDSDKMDTDENK. Residues 160-171 show a composition bias toward acidic residues; sequence EGEEVMESDESD. Basic and acidic residues predominate over residues 172-181; it reads SDKMDTDENK. Mg(2+)-binding residues include D593, D595, and D597. Positions 955–967 are bridging helix; that stretch reads PQDYFFHCMAGRE. Residues 1305–1316 show a composition bias toward acidic residues; sequence DSLTINDDDAPA. The disordered stretch occupies residues 1305–1411; it reads DSLTINDDDA…NSRSSNSFSD (107 aa). Over residues 1317 to 1336 the composition is skewed to low complexity; that stretch reads NDDTTNNDENTSQQQPSSQN. Acidic residues predominate over residues 1366 to 1399; the sequence is EDGEEEAEEKDSDEGESEAEESDDKSDVDSDSDE. Low complexity predominate over residues 1400–1411; the sequence is ISNSRSSNSFSD.

The protein belongs to the RNA polymerase beta' chain family. As to quaternary structure, component of the RNA polymerase I (Pol I) complex consisting of at least 13 subunits.

The protein resides in the nucleus. It carries out the reaction RNA(n) + a ribonucleoside 5'-triphosphate = RNA(n+1) + diphosphate. DNA-dependent RNA polymerase catalyzes the transcription of DNA into RNA using the four ribonucleoside triphosphates as substrates. Largest and catalytic core component of RNA polymerase I which synthesizes ribosomal RNA precursors. Forms the polymerase active center together with the second largest subunit. A single stranded DNA template strand of the promoter is positioned within the central active site cleft of Pol I. A bridging helix emanates from RPA1 and crosses the cleft near the catalytic site and is thought to promote translocation of Pol I by acting as a ratchet that moves the RNA-DNA hybrid through the active site by switching from straight to bent conformations at each step of nucleotide addition. The sequence is that of DNA-directed RNA polymerase I subunit rpa1 (polr1a) from Dictyostelium discoideum (Social amoeba).